A 61-amino-acid polypeptide reads, in one-letter code: Antimicrobial peptide 1 (61 aa).

The N-terminal stretch at 1–24 is a signal peptide; it reads LPVAFLKFAIVLILFIAMSAMIEA. Residue Gln25 is modified to Pyrrolidone carboxylic acid. 3 cysteine pairs are disulfide-bonded: Cys26-Cys43, Cys33-Cys47, and Cys42-Cys58.

The protein belongs to the AMP family. In terms of assembly, homodimer. Post-translationally, three disulfide bonds are present. In terms of tissue distribution, found only in seeds.

It localises to the secreted. Functionally, possesses antifungal activity and is also active on two tested Gram-positive bacteria but is non-toxic for Gram-negative bacteria and cultured human cells. The chain is Antimicrobial peptide 1 (AMP1) from Mirabilis jalapa (Garden four-o'clock).